A 527-amino-acid chain; its full sequence is Amine oxidase [flavin-containing] A (527 aa).

Met1 carries the post-translational modification N-acetylmethionine. At 1–497 (MERQEKANNA…RTFWERNLPS (497 aa)) the chain is on the cytoplasmic side. A Phosphoserine modification is found at Ser383. An S-8alpha-FAD cysteine modification is found at Cys406. The chain crosses the membrane as a helical; Anchor for type IV membrane protein span at residues 498 to 518 (VTGLLKIIGFSTSVTALWLAV). Over 519-527 (YKFRLLTRS) the chain is Mitochondrial intermembrane. Residues 520-522 (KFR) form an interaction with membrane phospholipid headgroups region.

Belongs to the flavin monoamine oxidase family. Monomer, homo- or heterodimer (containing two subunits of similar size). Each subunit contains a covalently bound flavin. Enzymatically active as monomer. FAD is required as a cofactor.

The protein resides in the mitochondrion outer membrane. It catalyses the reaction a secondary aliphatic amine + O2 + H2O = a primary amine + an aldehyde + H2O2. It carries out the reaction a primary methyl amine + O2 + H2O = an aldehyde + H2O2 + NH4(+). The enzyme catalyses (R)-adrenaline + O2 + H2O = (R)-3,4-dihydroxymandelaldehyde + methylamine + H2O2. The catalysed reaction is dopamine + O2 + H2O = 3,4-dihydroxyphenylacetaldehyde + H2O2 + NH4(+). It catalyses the reaction tyramine + O2 + H2O = (4-hydroxyphenyl)acetaldehyde + H2O2 + NH4(+). It carries out the reaction (R)-noradrenaline + O2 + H2O = (R)-3,4-dihydroxymandelaldehyde + H2O2 + NH4(+). The enzyme catalyses serotonin + O2 + H2O = (5-hydroxyindol-3-yl)acetaldehyde + H2O2 + NH4(+). The catalysed reaction is kynuramine + O2 + H2O = 3-(2-aminophenyl)-3-oxopropanal + H2O2 + NH4(+). It catalyses the reaction tryptamine + O2 + H2O = indole-3-acetaldehyde + H2O2 + NH4(+). It carries out the reaction 2-phenylethylamine + O2 + H2O = 2-phenylacetaldehyde + H2O2 + NH4(+). Catalyzes the oxidative deamination of primary and some secondary amine such as neurotransmitters, with concomitant reduction of oxygen to hydrogen peroxide and has important functions in the metabolism of neuroactive and vasoactive amines in the central nervous system and peripheral tissues. Preferentially oxidizes serotonin. Also catalyzes the oxidative deamination of kynuramine to 3-(2-aminophenyl)-3-oxopropanal that can spontaneously condense to 4-hydroxyquinoline. The protein is Amine oxidase [flavin-containing] A of Sus scrofa (Pig).